The chain runs to 206 residues: Large ribosomal subunit protein uL4 (206 aa).

A compositionally biased stretch (basic and acidic residues) spans 48-59 (THDTKTRSEVRG). The disordered stretch occupies residues 48 to 77 (THDTKTRSEVRGGGRKPWRQKGTGRARHGS). The span at 60–77 (GGRKPWRQKGTGRARHGS) shows a compositional bias: basic residues.

Belongs to the universal ribosomal protein uL4 family. As to quaternary structure, part of the 50S ribosomal subunit.

Its function is as follows. One of the primary rRNA binding proteins, this protein initially binds near the 5'-end of the 23S rRNA. It is important during the early stages of 50S assembly. It makes multiple contacts with different domains of the 23S rRNA in the assembled 50S subunit and ribosome. Forms part of the polypeptide exit tunnel. In Pelotomaculum thermopropionicum (strain DSM 13744 / JCM 10971 / SI), this protein is Large ribosomal subunit protein uL4.